The following is a 236-amino-acid chain: MKYKLLPCLLAIFLTGCDRTEVTLSFTPEMASFSNEFDFDPLRGPVKDFTQTLMDEQGEVTKRVSGTLSEEGCFDSLELLDLENNTVVALVLDANYYRDAQTLEKRVRLQGKCQLAELPSAGVSWETDDNGFVIKASSKQMQMEYRYDDQGYPLGKTTKSHDKTLSVSATPSTDPIKKLDYTAVTILNNQRVGNVKQSCEYDSHANPVDCQLIIVDEGVKPAIERVYTIKNTIDYY.

The N-terminal stretch at 1-16 is a signal peptide; it reads MKYKLLPCLLAIFLTG. Cysteine 17 carries N-palmitoyl cysteine lipidation. Cysteine 17 carries S-diacylglycerol cysteine lipidation.

This sequence belongs to the UPF0257 family.

Its subcellular location is the cell membrane. The chain is UPF0257 lipoprotein YnfC from Escherichia coli O17:K52:H18 (strain UMN026 / ExPEC).